The chain runs to 310 residues: tRNA dimethylallyltransferase (310 aa).

11–18 (GPTGVGKT) serves as a coordination point for ATP. 13–18 (TGVGKT) is a substrate binding site.

Belongs to the IPP transferase family. In terms of assembly, monomer. Requires Mg(2+) as cofactor.

It carries out the reaction adenosine(37) in tRNA + dimethylallyl diphosphate = N(6)-dimethylallyladenosine(37) in tRNA + diphosphate. Catalyzes the transfer of a dimethylallyl group onto the adenine at position 37 in tRNAs that read codons beginning with uridine, leading to the formation of N6-(dimethylallyl)adenosine (i(6)A). This is tRNA dimethylallyltransferase from Latilactobacillus sakei subsp. sakei (strain 23K) (Lactobacillus sakei subsp. sakei).